We begin with the raw amino-acid sequence, 432 residues long: UDP-N-acetylglucosamine 1-carboxyvinyltransferase (432 aa).

A phosphoenolpyruvate-binding site is contributed by 22 to 23 (KN). UDP-N-acetyl-alpha-D-glucosamine is bound at residue arginine 92. The active-site Proton donor is the cysteine 116. Position 116 is a 2-(S-cysteinyl)pyruvic acid O-phosphothioketal (cysteine 116). UDP-N-acetyl-alpha-D-glucosamine is bound by residues 121–125 (RPVDQ), aspartate 307, and isoleucine 329.

The protein belongs to the EPSP synthase family. MurA subfamily.

The protein localises to the cytoplasm. It catalyses the reaction phosphoenolpyruvate + UDP-N-acetyl-alpha-D-glucosamine = UDP-N-acetyl-3-O-(1-carboxyvinyl)-alpha-D-glucosamine + phosphate. The protein operates within cell wall biogenesis; peptidoglycan biosynthesis. In terms of biological role, cell wall formation. Adds enolpyruvyl to UDP-N-acetylglucosamine. This chain is UDP-N-acetylglucosamine 1-carboxyvinyltransferase, found in Psychrobacter sp. (strain PRwf-1).